A 241-amino-acid chain; its full sequence is WAP four-disulfide core domain protein 8 (241 aa).

Residues 1-38 (MWTVRTEGGHFPLHSPTFSWRNVAFLLLLSLALEWTSA) form the signal peptide. A WAP 1 domain is found at 44–91 (IKHKPGLCPKERLTCTTELPDSCNTDFDCKEYQKCCFFACQKKCMDPF). 15 disulfide bridges follow: cysteine 51–cysteine 79, cysteine 58–cysteine 83, cysteine 66–cysteine 78, cysteine 72–cysteine 87, cysteine 95–cysteine 145, cysteine 104–cysteine 128, cysteine 120–cysteine 141, cysteine 154–cysteine 182, cysteine 165–cysteine 186, cysteine 169–cysteine 181, cysteine 175–cysteine 190, cysteine 201–cysteine 229, cysteine 208–cysteine 232, cysteine 216–cysteine 228, and cysteine 222–cysteine 236. The 51-residue stretch at 95-145 (CMLPVRHGNCNHEAQRWHFDFKNYRCTPFKYRGCEGNANNFLNEDACRTAC) folds into the BPTI/Kunitz inhibitor domain. WAP domains follow at residues 147 to 194 (LIVK…ARAW) and 195 to 240 (TVKK…MDPR).

In terms of tissue distribution, expressed ubiquitously, the highest levels are found in the epididymis followed by testis and trachea.

The protein resides in the secreted. The polypeptide is WAP four-disulfide core domain protein 8 (WFDC8) (Homo sapiens (Human)).